The sequence spans 392 residues: p21-activated protein kinase-interacting protein 1 (392 aa).

WD repeat units follow at residues 33–72, 73–113, 114–155, 156–195, 196–235, and 236–275; these read VADF…MKKK, IEHG…AKKW, ECLK…LVEG, RSAF…LDTA, SISG…CDSL, and VCLC…KMWK. Residues 312-392 are disordered; it reads SLPPAAEPSP…RKKKKIKTMQ (81 aa). Serine 320 is subject to Phosphoserine. Residues 325–345 are compositionally biased toward basic and acidic residues; it reads EQSKIGKKEPGDTVHKEEKRS. Basic residues predominate over residues 381-392; it reads KKRKKKKIKTMQ.

Interacts with PAK1. In terms of tissue distribution, expressed in brain, colon, heart, kidney, liver, lung, muscle, peripheral blood leukocytes, placenta, small intestine, spleen and thymus.

The protein resides in the nucleus. It is found in the nucleolus. Negatively regulates the PAK1 kinase. PAK1 is a member of the PAK kinase family, which has been shown to play a positive role in the regulation of signaling pathways involving MAPK8 and RELA. PAK1 exists as an inactive homodimer, which is activated by binding of small GTPases such as CDC42 to an N-terminal regulatory domain. PAK1IP1 also binds to the N-terminus of PAK1, and inhibits the specific activation of PAK1 by CDC42. May be involved in ribosomal large subunit assembly. The sequence is that of p21-activated protein kinase-interacting protein 1 (PAK1IP1) from Homo sapiens (Human).